The chain runs to 951 residues: Thyroid hormone receptor-associated protein 3 (951 aa).

Over residues 1-13 (MSKTNKSKSGSRS) the composition is skewed to low complexity. Residues 1–94 (MSKTNKSKSG…YFRGRNRGFY (94 aa)) form a disordered region. Residue S2 is modified to N-acetylserine. The tract at residues 2 to 190 (SKTNKSKSGS…KSSSKDSRPS (189 aa)) is required for mRNA splicing activation. Residues 14–51 (SRSRSASRSRSRSFSKSRSRSRSVSRSRKRRLSSRSRS) are compositionally biased toward basic residues. R17 is modified (dimethylated arginine). Basic and acidic residues predominate over residues 58 to 75 (HNRERNHPRVYQNRDFRG). Asymmetric dimethylarginine is present on R66. Residues 82–94 (RPYYFRGRNRGFY) are compositionally biased toward low complexity. Asymmetric dimethylarginine occurs at positions 101 and 108. The disordered stretch occupies residues 117–558 (AYSPRRGRSR…GDFSSGKSSF (442 aa)). Positions 121-143 (RRGRSRSRSPKRRSPSPRSRSHS) are enriched in basic residues. Residues 144–155 (RNSDKSSSDRSR) show a composition bias toward basic and acidic residues. The segment covering 157-166 (SSSSRSSSNH) has biased composition (low complexity). Residues 167-188 (SRVESSKRKSTKEKKSSSKDSR) are compositionally biased toward basic and acidic residues. Residue K202 forms a Glycyl lysine isopeptide (Lys-Gly) (interchain with G-Cter in SUMO1); alternate linkage. K202 participates in a covalent cross-link: Glycyl lysine isopeptide (Lys-Gly) (interchain with G-Cter in SUMO2); alternate. The segment covering 204-220 (QTFSGGTSQDIKGSESS) has biased composition (polar residues). Residue K215 forms a Glycyl lysine isopeptide (Lys-Gly) (interchain with G-Cter in SUMO2) linkage. S220 carries the phosphoserine modification. K221 participates in a covalent cross-link: Glycyl lysine isopeptide (Lys-Gly) (interchain with G-Cter in SUMO2); alternate. K221 carries the post-translational modification N6-acetyllysine; alternate. Phosphoserine occurs at positions 233, 238, 240, 243, and 248. A Glycyl lysine isopeptide (Lys-Gly) (interchain with G-Cter in SUMO2); alternate cross-link involves residue K252. K252 is subject to N6-methyllysine; alternate. Phosphoserine occurs at positions 253 and 257. Residues 266–276 (RPSPVPKPSPP) show a composition bias toward pro residues. A compositionally biased stretch (low complexity) spans 305–322 (GSGSLSPSKKSPVGKSPP). A phosphoserine mark is found at S315 and S320. The residue at position 324 (T324) is a Phosphothreonine. S326 is modified (phosphoserine). At Y328 the chain carries Phosphotyrosine. A Glycyl lysine isopeptide (Lys-Gly) (interchain with G-Cter in SUMO2) cross-link involves residue K333. A compositionally biased stretch (low complexity) spans 337–346 (AASGGAAYSK). S339 is modified (phosphoserine). Residue K346 forms a Glycyl lysine isopeptide (Lys-Gly) (interchain with G-Cter in SUMO2); alternate linkage. At K346 the chain carries N6-acetyllysine; alternate. Basic and acidic residues predominate over residues 347 to 387 (RYLEEQKTENGKDKEQKQTNADKEKLKEKGGFSDADVKMKS). Residues K353 and K375 each participate in a glycyl lysine isopeptide (Lys-Gly) (interchain with G-Cter in SUMO2) cross-link. The segment at 359 to 951 (DKEQKQTNAD…EKDSLQPSAE (593 aa)) is required for mRNA decay activity. S379 carries the post-translational modification Phosphoserine. K384 participates in a covalent cross-link: Glycyl lysine isopeptide (Lys-Gly) (interchain with G-Cter in SUMO1); alternate. Residue K384 forms a Glycyl lysine isopeptide (Lys-Gly) (interchain with G-Cter in SUMO2); alternate linkage. Glycyl lysine isopeptide (Lys-Gly) (interchain with G-Cter in SUMO2) cross-links involve residues K386 and K393. Position 394 is a phosphothreonine (T394). K398 is covalently cross-linked (Glycyl lysine isopeptide (Lys-Gly) (interchain with G-Cter in SUMO2)). Phosphoserine is present on residues S403 and S405. The segment covering 411 to 449 (LRDDFEKKMADFHKEELDEHDKDKSKGRKEPEFDDEPKF) has biased composition (basic and acidic residues). Glycyl lysine isopeptide (Lys-Gly) (interchain with G-Cter in SUMO2) cross-links involve residues K418 and K424. K448 participates in a covalent cross-link: Glycyl lysine isopeptide (Lys-Gly) (interchain with G-Cter in SUMO1); alternate. Residues K448 and K452 each participate in a glycyl lysine isopeptide (Lys-Gly) (interchain with G-Cter in SUMO2); alternate cross-link. The residue at position 452 (K452) is an N6-acetyllysine; alternate. Residues K459 and K465 each participate in a glycyl lysine isopeptide (Lys-Gly) (interchain with G-Cter in SUMO2) cross-link. 2 stretches are compositionally biased toward basic and acidic residues: residues 460-483 (NQEEEKSGKWESLHTGKEKQRKAE) and 490-518 (FTERSRKEERGGSKRSESGHRGFVPEKNF). At S466 the chain carries Phosphoserine. Residues K468 and K476 each participate in a glycyl lysine isopeptide (Lys-Gly) (interchain with G-Cter in SUMO2); alternate cross-link. N6-acetyllysine; alternate is present on residues K468 and K476. Residue K481 forms a Glycyl lysine isopeptide (Lys-Gly) (interchain with G-Cter in SUMO2) linkage. K516 carries the post-translational modification N6-acetyllysine. Residue K524 forms a Glycyl lysine isopeptide (Lys-Gly) (interchain with G-Cter in SUMO2); alternate linkage. K524 carries the N6-acetyllysine; alternate modification. Position 532 is a phosphoserine (S532). The segment covering 537 to 547 (KTSESRDKLGS) has biased composition (basic and acidic residues). K548 participates in a covalent cross-link: Glycyl lysine isopeptide (Lys-Gly) (interchain with G-Cter in SUMO2). Positions 548–558 (KGDFSSGKSSF) are enriched in low complexity. 549 to 556 (GDFSSGKS) contacts ATP. K555 participates in a covalent cross-link: Glycyl lysine isopeptide (Lys-Gly) (interchain with G-Cter in SUMO2); alternate. The residue at position 555 (K555) is an N6-acetyllysine; alternate. 3 positions are modified to phosphoserine: S557, S559, and S572. A Glycyl lysine isopeptide (Lys-Gly) (interchain with G-Cter in SUMO2) cross-link involves residue K599. Residues S616, S619, S669, S679, and S681 each carry the phosphoserine modification. Over residues 660–677 (EQEAAKNKKSPEIHRRID) the composition is skewed to basic and acidic residues. A disordered region spans residues 660 to 951 (EQEAAKNKKS…EKDSLQPSAE (292 aa)). A compositionally biased stretch (basic and acidic residues) spans 688-758 (LTHEELKSPR…RSTEKTEKTH (71 aa)). K694 participates in a covalent cross-link: Glycyl lysine isopeptide (Lys-Gly) (interchain with G-Cter in SUMO2). S695 is modified (phosphoserine). Residues K702, K706, K708, K753, and K756 each participate in a glycyl lysine isopeptide (Lys-Gly) (interchain with G-Cter in SUMO2) cross-link. The segment covering 759–772 (KGSKKQKKHRRARD) has biased composition (basic residues). A compositionally biased stretch (low complexity) spans 776-786 (SSSSSSQSSHS). N6-acetyllysine is present on K808. Position 841 is an asymmetric dimethylarginine (R841). Residues 844–854 (YSGNNNNNSNN) are compositionally biased toward low complexity. Residue S860 is modified to Phosphoserine. T870 carries the phosphothreonine modification. Glycyl lysine isopeptide (Lys-Gly) (interchain with G-Cter in SUMO2) cross-links involve residues K872 and K875. Positions 877–891 (YLHDDREGEGSDKWM) are enriched in basic and acidic residues. A phosphoserine mark is found at S924 and S935. The span at 926–936 (EEGEIEDDESG) shows a compositional bias: acidic residues.

The protein belongs to the BCLAF1/THRAP3 family. Associated with the large multiprotein complex TRAP (Mediator complex-like). Interacts with SFPQ; the interaction is dependent on SFPQ phosphorylation at 'Thr-687' and inhibits binding of SFPQ to an ESS1 exonic splicing silencer element-containing RNA. Interacts with NXF1. Component of the SNARP complex which consists at least of SNIP1, SNW1, THRAP3, BCLAF1 and PNN. Associated with spliced mRNP complexes. Interacts with HELZ2 and PPARG. Interacts with CLOCK and BMAL1. Component of a MACOM-like complex, named WTAP complex, composed of WTAP, ZC3H13, CBLL1, KIAA1429, RBM15, BCLAF1 and THRAP3.

The protein localises to the nucleus. It is found in the nucleoplasm. It localises to the nucleus speckle. Involved in pre-mRNA splicing. Remains associated with spliced mRNA after splicing which probably involves interactions with the exon junction complex (EJC). Can trigger mRNA decay which seems to be independent of nonsense-mediated decay involving premature stop codons (PTC) recognition. May be involved in nuclear mRNA decay. Involved in regulation of signal-induced alternative splicing. During splicing of PTPRC/CD45 is proposed to sequester phosphorylated SFPQ from PTPRC/CD45 pre-mRNA in resting T-cells. Involved in cyclin-D1/CCND1 mRNA stability probably by acting as component of the SNARP complex which associates with both the 3'end of the CCND1 gene and its mRNA. Involved in response to DNA damage. Is excluced from DNA damage sites in a manner that parallels transcription inhibition; the function may involve the SNARP complex. Initially thought to play a role in transcriptional coactivation through its association with the TRAP complex; however, it is not regarded as a stable Mediator complex subunit. Cooperatively with HELZ2, enhances the transcriptional activation mediated by PPARG, maybe through the stabilization of the PPARG binding to DNA in presence of ligand. May play a role in the terminal stage of adipocyte differentiation. Plays a role in the positive regulation of the circadian clock. Acts as a coactivator of the CLOCK-BMAL1 heterodimer and promotes its transcriptional activator activity and binding to circadian target genes. This is Thyroid hormone receptor-associated protein 3 (Thrap3) from Mus musculus (Mouse).